Consider the following 1367-residue polypeptide: MQRPFLLAYLVLSLLFNSALGFPTALVPRGSSEGTSCNSIVNGCPNLDFNWHMDQQNIMQYTLDVTSVSWVQDNTYQITIHVKGKENIDLKYLWSLKIIGVTGPKGTVQLYGYNENTYLIDNPTDFTATFEVYATQDVNSCQVWMPNFQIQFEYLQGSAAQYASSWQWGTTSFDLSTGCNNYDNQGHSQTDFPGFYWNIDCDNNCGGTKSSTTTSSTSESSTTTSSTSESSTTTSSTSESSTTTSSTSESSTSSSTTAPATPTTTSCTKEKPTPPTTTSCTKEKPTPPHHDTTPCTKKKTTTSKTCTKKTTTPVPTPSSSTTESSSAPVPTPSSSTTESSSAPVTSSTTESSSAPVPTPSSSTTESSSAPVTSSTTESSSAPVTSSTTESSSAPVPTPSSSTTESSSAPVTSSTTESSSAPVTSSTTESSSAPVTSSTTESSSAPVTSSTTESSSAPVPTPSSSTTESSSAPVTSSTTESSSAPVPTPSSSTTESSSAPVTSSTTESSSAPVPTPSSSTTESSSAPAPTPSSSTTESSSAPVTSSTTESSSAPVPTPSSSTTESSSTPVTSSTTESSSAPVPTPSSSTTESSSAPVPTPSSSTTESSSAPAPTPSSSTTESSSAPVTSSTTESSSAPVPTPSSSTTESSSAPVPTPSSSTTESSSAPVPTPSSSTTESSSAPVTSSTTESSSAPVTSSTTESSSAPVPTPSSSTTESSSAPVPTPSSSTTESSSAPVPTPSSSTTESSSAPVTSSTTESSSAPVPTPSSSTTESSSAPVPTPSSSTTESSSAPVPTPSSSTTESSVAPVPTPSSSSNITSSAPSSTPFSSSTESSSVPVPTPSSSTTESSSAPVSSSTTESSVAPVPTPSSSSNITSSAPSSIPFSSTTESFSTGTTVTPSSSKYPGSQTETSVSSTTETTIVPTKTTTSVTTPSTTTITTTVCSTGTNSAGETTSGCSPKTVTTTVPTTTTTSVTTSSTTTITTTVCSTGTNSAGETTSGCSPKTITTTVPCSTSPSETASESTTTSPTTPVTTVVSTTVVTTEYSTSTKPGGEITTTFVTKNIPTTYLTTIAPTPSVTTVTNFTPTTITTTVCSTGTNSAGETTSGCSPKTVTTTVPCSTGTGEYTTEATTLVTTAVTTTVVTTESSTGTNSAGKTTTGYTTKSVPTTYVTTLAPSAPVTPATNAVPTTITTTECSAATNAAGETTSVCSAKTIVSSASAGENTAPSATTPVTTAIPTTVITTESSVGTNSAGETTTGYTTKSIPTTYITTLIPGSNGAKNYETVATATNPISIKTTSQLATTASASSVAPVVTSPSLTGPLQSASGSAVATYSVPSISSTYQGAANIKVLGNFMWLLLALPVVF.

Residues 1-21 (MQRPFLLAYLVLSLLFNSALG) form the signal peptide. In terms of domain architecture, Flo11 spans 31–207 (SSEGTSCNSI…NIDCDNNCGG (177 aa)). 3 cysteine pairs are disulfide-bonded: Cys-37–Cys-201, Cys-44–Cys-179, and Cys-141–Cys-205. Positions 209-267 (KSSTTTSSTSESSTTTSSTSESSTTTSSTSESSTTTSSTSESSTSSSTTAPATPTTTSC) are enriched in low complexity. 2 disordered regions span residues 209-975 (KSST…TTSV) and 1008-1032 (TTTV…PTTP). Repeat copies occupy residues 210-219 (SSTTTSSTSE), 220-229 (SSTTTSSTSE), 230-239 (SSTTTSSTSE), 240-249 (SSTTTSSTSE), 262-274 (PTTT…KPTP), 275-287 (PTTT…KPTP), 313-327 (PVPT…SSSA), 328-342 (PVPT…SSSA), 343-354 (PVTSSTTESSSA), 355-369 (PVPT…SSSA), 370-381 (PVTSSTTESSSA), 382-393 (PVTSSTTESSSA), 394-408 (PVPT…SSSA), 409-420 (PVTSSTTESSSA), 421-432 (PVTSSTTESSSA), 433-444 (PVTSSTTESSSA), 445-456 (PVTSSTTESSSA), 457-471 (PVPT…SSSA), 472-483 (PVTSSTTESSSA), 484-498 (PVPT…SSSA), 499-510 (PVTSSTTESSSA), 511-525 (PVPT…SSSA), 526-540 (PAPT…SSSA), 541-552 (PVTSSTTESSSA), 568-579 (PVTSSTTESSSA), 580-594 (PVPT…SSSA), 595-609 (PVPT…SSSA), 610-624 (PAPT…SSSA), 625-636 (PVTSSTTESSSA), 637-651 (PVPT…SSSA), 652-666 (PVPT…SSSA), 667-681 (PVPT…SSSA), 682-693 (PVTSSTTESSSA), 694-705 (PVTSSTTESSSA), 706-720 (PVPT…SSSA), 721-735 (PVPT…SSSA), 736-750 (PVPT…SSSA), 751-762 (PVTSSTTESSSA), 763-777 (PVPT…SSSA), 778-792 (PVPT…SSSA), 808-822 (PVPT…TSSA), 838-852 (PVPT…SSSA), 865-879 (PVPT…TSSA), 937-968 (TTIT…TTVP), and 981-1012 (TTIT…TTVP). The interval 210-249 (SSTTTSSTSESSTTTSSTSESSTTTSSTSESSTTTSSTSE) is 4 X 10 AA repeats, Ser/Thr-rich. Positions 262-287 (PTTTSCTKEKPTPPTTTSCTKEKPTP) are 2 X 13 AA repeats, Thr-rich. Basic and acidic residues predominate over residues 281 to 292 (TKEKPTPPHHDT). 2 stretches are compositionally biased toward low complexity: residues 302–900 (TSKT…TVTP) and 910–948 (TETS…STGT). Residues 313-852 (PVPTPSSSTT…SSSTTESSSA (540 aa)) are 22 X 15 AA approximate repeats, Ser-rich. The segment at 343-762 (PVTSSTTESS…TSSTTESSSA (420 aa)) is 15 X 12 AA repeats, Ser/Thr-rich. The N-linked (GlcNAc...) asparagine glycan is linked to Asn-817. Asn-874 is a glycosylation site (N-linked (GlcNAc...) asparagine). The interval 937–1119 (TTITTTVCST…SPKTVTTTVP (183 aa)) is 3 X 32 AA tandem repeats, Thr-rich. Residues 949–961 (NSAGETTSGCSPK) are compositionally biased toward polar residues. The span at 962–975 (TVTTTVPTTTTTSV) shows a compositional bias: low complexity. Over residues 1014 to 1032 (STSPSETASESTTTSPTTP) the composition is skewed to low complexity. The stretch at 1088-1119 (TTITTTVCSTGTNSAGETTSGCSPKTVTTTVP) is one 5-3 repeat. Gly-1346 carries GPI-anchor amidated glycine lipidation. The propeptide at 1347-1367 (AANIKVLGNFMWLLLALPVVF) is removed in mature form.

This sequence belongs to the flocculin family. Highly divergent. Extensively O-mannosylated. In terms of processing, the GPI-anchor is attached to the protein in the endoplasmic reticulum and serves to target the protein to the cell surface. There, the glucosamine-inositol phospholipid moiety is cleaved off and the GPI-modified mannoprotein is covalently attached via its lipidless GPI glycan remnant to the 1,6-beta-glucan of the outer cell wall layer. Post-translationally, a soluble form is probably produced by proteolytic cleavage at the cell surface (shedding).

The protein localises to the secreted. It localises to the cell wall. Its subcellular location is the membrane. Its function is as follows. Homophilic binding protein that enables kin discrimination in heterogeneous yeast populations by mediating homotypic cell-cell interactions during flocculation, a reversible and asexual process in which cells adhere to form aggregates (flocs). Plays a role in cell-substrate adhesion, haploid invasive growth, diploid pseudohyphae formation and biofilm (flor) development. Adhesive activity is inhibited by mannose, but not by glucose, maltose, sucrose or galactose. This is Flocculation protein FLO11 from Saccharomyces cerevisiae (strain ATCC 204508 / S288c) (Baker's yeast).